The following is an 890-amino-acid chain: MQTHEIRERFTNHFVNAGHTAVPSASLILDDPNLLFVNAGMVPFKPYFLGQQTPPFANGTATSIQKCVRTLDIEEVGITTRHNTFFQMAGNFSFGQYFKEGAITHAWTLLTNPVEEGGYGLDPERLWVTVYLDDDEAAEIWEKKIGVPAERIQRLGMADNYWSMGVPGPCGPCSEIYYDRGPKYGNEGGPAVDDSRYLEIWNLVFMEFERGEGTGKDSFEIIGELPKKNIDTGMGVERVACILQGVENVYETDLLRPVIDVAETLTGATYGRDNTADIRFRVIADHSRTGMMLILDGVTPGNEGRGYILRRLLRRIIRSARLLGATGETMEKFMNTIMDTMTPSYPEIAENRERILRVAITEERAFLKTLVSGTHLFEEAAASIKSSGSTTVAGAQAFALHDTYGFPIDLTLEMAAEAGLEVDVEGFESLMAEQRSRAKADSQAKKHGHADLSIYREWVDNHPTVFTGFEELESQSRVLGLLSDGTRINEAAEGQEVEVILDQSPLYAESGGQLGDRGRILMGDTVVDIQDVQKIGKKLWVHKAVVANGGLAVGDEVVAAVDKQWRHAARQAHTATHLIHAALRQVLGPTAVQAGSMNKPGYLRFDFNYTDQLTPEQLNQIQAITNEAVDTDWAVNTIETSLEEARAMGAMALFGENYGDLVRVVEIGGPFSMELCGGTHVEHSSQIGPVALLGESSIGSGVRRIEAYSGLNSFNYLSKERALAESLSSILKTPSTDLPERISQLLDKLKAAEKEIATLHRRELAAKSEEFITGAEEINGIRAVMVRVQDGLDAGDLRTLATTLRDKLSNGEGLVVVASRSEDGTKVPFVAGATKQAVARGVHSGNLIKLIGSYIDGRGGGKPDMAQGSGSDIDGLDAAFNAVRAELENL.

Zn(2+) is bound by residues His573, His577, Cys676, and His680.

Belongs to the class-II aminoacyl-tRNA synthetase family. The cofactor is Zn(2+).

Its subcellular location is the cytoplasm. It catalyses the reaction tRNA(Ala) + L-alanine + ATP = L-alanyl-tRNA(Ala) + AMP + diphosphate. In terms of biological role, catalyzes the attachment of alanine to tRNA(Ala) in a two-step reaction: alanine is first activated by ATP to form Ala-AMP and then transferred to the acceptor end of tRNA(Ala). Also edits incorrectly charged Ser-tRNA(Ala) and Gly-tRNA(Ala) via its editing domain. In Corynebacterium efficiens (strain DSM 44549 / YS-314 / AJ 12310 / JCM 11189 / NBRC 100395), this protein is Alanine--tRNA ligase.